Reading from the N-terminus, the 1284-residue chain is ABC multidrug transporter atrC (1284 aa).

Residues 1 to 11 are compositionally biased toward basic and acidic residues; the sequence is MKSTAESKETP. Residues 1-24 are disordered; the sequence is MKSTAESKETPSQDESTTSVPCTE. Transmembrane regions (helical) follow at residues 55–75, 99–119, 178–198, 203–223, 282–302, and 320–340; these read AVAI…NLIF, AAEL…LSYT, IGLL…AFVV, TLIC…VAAV, LLGL…GLAF, and IFTV…LAPY. Residues 55-346 enclose the ABC transmembrane type-1 1 domain; it reads AVAILAACAS…LAPYSIEFSR (292 aa). Residues 381–626 form the ABC transporter 1 domain; it reads VELENVTFSY…DGVYAGLVKI (246 aa). N-linked (GlcNAc...) asparagine glycans are attached at residues N385 and N401. 416 to 423 contributes to the ATP binding site; the sequence is GQSGSGKS. Residues N488 and N632 are each glycosylated (N-linked (GlcNAc...) asparagine). Helical transmembrane passes span 705–725 and 745–765; these read LVVL…AILM and FYAS…LAVG. Residues 705–992 enclose the ABC transmembrane type-1 2 domain; sequence LVVLLGCLGG…LFQWSTSITK (288 aa). The N-linked (GlcNAc...) asparagine glycan is linked to N800. Transmembrane regions (helical) follow at residues 824-844, 846-866, 931-951, and 955-975; these read IALV…AIAF, WKLG…AGMV, MICF…GFWY, and LVSL…SVFF. The N-linked (GlcNAc...) asparagine glycan is linked to N995. The ABC transporter 2 domain maps to 1027–1280; sequence IAMDNVRFSY…GGLYRRMCEA (254 aa). Residue 1062 to 1069 participates in ATP binding; it reads GSSGCGKS. Residue N1122 is glycosylated (N-linked (GlcNAc...) asparagine).

The protein belongs to the ABC transporter superfamily. ABCB family. Multidrug resistance exporter (TC 3.A.1.201) subfamily.

Its subcellular location is the cell membrane. Pleiotropic ABC efflux transporter involved in the protection of the cells against a wide range of toxic compounds. The sequence is that of ABC multidrug transporter atrC from Emericella nidulans (strain FGSC A4 / ATCC 38163 / CBS 112.46 / NRRL 194 / M139) (Aspergillus nidulans).